Consider the following 98-residue polypeptide: NADH-ubiquinone oxidoreductase chain 4L (98 aa).

Helical transmembrane passes span Met1–Val21, Ser29–Leu49, and Ile61–Ile81.

Belongs to the complex I subunit 4L family. In terms of assembly, core subunit of respiratory chain NADH dehydrogenase (Complex I) which is composed of 45 different subunits.

It is found in the mitochondrion inner membrane. The enzyme catalyses a ubiquinone + NADH + 5 H(+)(in) = a ubiquinol + NAD(+) + 4 H(+)(out). Core subunit of the mitochondrial membrane respiratory chain NADH dehydrogenase (Complex I) which catalyzes electron transfer from NADH through the respiratory chain, using ubiquinone as an electron acceptor. Part of the enzyme membrane arm which is embedded in the lipid bilayer and involved in proton translocation. The polypeptide is NADH-ubiquinone oxidoreductase chain 4L (MT-ND4L) (Piliocolobus badius (Western red colobus)).